Here is a 129-residue protein sequence, read N- to C-terminus: Transcription antitermination protein NusB (129 aa).

The protein belongs to the NusB family.

In terms of biological role, involved in transcription antitermination. Required for transcription of ribosomal RNA (rRNA) genes. Binds specifically to the boxA antiterminator sequence of the ribosomal RNA (rrn) operons. This chain is Transcription antitermination protein NusB, found in Staphylococcus aureus (strain N315).